Reading from the N-terminus, the 956-residue chain is Cytolysin RtxA (956 aa).

Residues 48-58 (LTIPKDYDIEK) form a cholesterol recognition/amino acid consensus (CRAC) region 1 region. Cholesterol recognition/amino acid consensus (CARC) region regions lie at residues 280–287 (KAISSYVL) and 340–348 (KFGYDGDSL). The segment at 349–354 (LAEYQR) is cholesterol recognition/amino acid consensus (CRAC) region 2. Residues 444–453 (RHAHYLERNL) are cholesterol recognition/amino acid consensus (CARC) region 3. The N6-myristoyl lysine moiety is linked to residue lysine 558. One copy of the Hemolysin-type calcium-binding 1 repeat lies at 613–639 (VNAGSGNDDIFAGQGKMNVDGGTGHDR). Lysine 689 carries N6-myristoyl lysine lipidation. Hemolysin-type calcium-binding repeat units follow at residues 722-756 (GSQF…DDRL) and 757-791 (FGGN…GNDV).

It belongs to the RTX prokaryotic toxin (TC 1.C.11) family. Post-translationally, myristoylated by RtxC; the toxin only becomes active when modified. Mainly myristoylated; a very minor fraction is acylated with hydroxymyristoyl, lauroyl and palmitoleyl chains fatty acyl groups. Fatty acylation is involved in binding to host membranes and promotes the irreversible insertion of RtxA into the host cell membrane.

The protein localises to the secreted. The protein resides in the host cell membrane. Bacterial cytolysin that attacks host cell membranes and causes cell rupture by forming a pore. Binds and permeabilizes target cells by forming cation-selective pores. Constitutes the key virulence cytotoxin of K.kingae. Binds cholesterol and oligosaccharides on the surface of host cells. Does not bind beta-2 integrin (ITGB2) on the host cell surface. The polypeptide is Cytolysin RtxA (Kingella kingae).